A 617-amino-acid chain; its full sequence is MKRDVRILLLGEPKVGKTSLIMSLVGEEFPEQVPLRAEEITIPADVTPEKVPTHIVDYSENEQTDEVLREEIVKANVVCVVYDVTQEETIDKIRTKWIPLVNGGAEKGSKIPIILVGNKSDLRSGSSMETILPIMNQFSEIETCVECSAKNLKNISELFYYAQKAVLHPTAPLYDPEDKQLKAQCVRALSRIFSISDQDNDHILSDAELNCFQKLCFGNPLAPQALEDVKTVVWKNTSDGVQDNGLTLNGFLFLNTLFIQRGRHETTWTILRKFGYDDTLELTDDYLYPVLRVSVGCTTELNHLGHQFLLKLFEKYDEDKDSALSPAELKNLFSVLPYMPWSSTVYSNIPLTDDCYISQHGYLCQWMLLAYLDVHRCLEHLGYLGYPILMEQECQTSAITVTREKALDLDNRQTQRTVFLCKVIGPRGTGKTDFLRAFLQRSTERSDRDPGAPSIYAINTVSIANQDKYLILEEVDVETEFLKAADAACDVACLMYDVSDPDSFNYCASIYKQHYMDSGIPCVVLGSKADLVEVKQHHGMSPSEFCYKHRLPSPLHFSALLTHTHTHIYSKLTWAAMYPHLNGSDMSSTSFWLRVTLGATIAAMLGFALYRAFSRHK.

The Cytoplasmic segment spans residues 1–590 (MKRDVRILLL…LNGSDMSSTS (590 aa)). In terms of domain architecture, Miro 1 spans 2–168 (KRDVRILLLG…FYYAQKAVLH (167 aa)). GTP contacts are provided by Gly16, Lys17, Thr18, and Ser19. Residue Thr18 coordinates Mg(2+). Position 57 (Asp57) interacts with Mg(2+). Positions 59, 118, 119, 121, 149, and 150 each coordinate GTP. EF-hand domains follow at residues 184 to 219 (QCVRALSRIFSISDQDNDHILSDAELNCFQKLCFGN) and 304 to 339 (LGHQFLLKLFEKYDEDKDSALSPAELKNLFSVLPYM). Positions 197, 199, 201, 208, 317, 319, 321, and 328 each coordinate Ca(2+). The 163-residue stretch at 416–578 (RTVFLCKVIG…YSKLTWAAMY (163 aa)) folds into the Miro 2 domain. 4 residues coordinate GTP: Gly428, Gly430, Lys431, and Thr432. Positions 432 and 474 each coordinate Mg(2+). Residues Lys528 and Asp530 each coordinate GTP. Residues 591 to 613 (FWLRVTLGATIAAMLGFALYRAF) traverse the membrane as a helical; Anchor for type IV membrane protein segment. Over 614–617 (SRHK) the chain is Mitochondrial intermembrane.

This sequence belongs to the mitochondrial Rho GTPase family. In terms of assembly, homodimer.

The protein resides in the mitochondrion outer membrane. It catalyses the reaction GTP + H2O = GDP + phosphate + H(+). It carries out the reaction ATP + H2O = ADP + phosphate + H(+). The catalysed reaction is UTP + H2O = UDP + phosphate + H(+). In terms of biological role, atypical mitochondrial nucleoside-triphosphatase (NTPase) involved in mitochondrial trafficking. Probably involved in control of anterograde transport of mitochondria and their subcellular distribution. Can hydrolyze GTP, ATP and UTP. The chain is Mitochondrial Rho GTPase 2 (rhot2) from Danio rerio (Zebrafish).